Consider the following 398-residue polypeptide: uncharacterized protein (398 aa).

Helical transmembrane passes span 43–65, 89–108, 156–173, 180–198, 224–246, 259–281, 291–311, 316–338, 351–373, and 380–397; these read PILPMLITSVGGGSLSIGLVGGL, IFVVLGYLTSSMFKLLLGLS, TAGAILGSTLSLLFILYL, IILIAAVIGFLTLIPLYFV, LFILISAIFTLSNFSYMFYILRA, IIIPIALYILYNIFYATFSIPFG, SVLTIGYIVYGIVSLGFAYFI, LILLFALYGIAYALFAGNQKAYV, LGLFYTVVGLTSLPASLIAGYLW, and TFLYGSVLAIISGLLLLF.

Belongs to the major facilitator superfamily.

Its subcellular location is the cell membrane. This is an uncharacterized protein from Methanocaldococcus jannaschii (strain ATCC 43067 / DSM 2661 / JAL-1 / JCM 10045 / NBRC 100440) (Methanococcus jannaschii).